The following is a 471-amino-acid chain: Siroheme synthase 1 (471 aa).

The segment at 1 to 203 (MEYLPLFAQL…GDTRAAEAVL (203 aa)) is precorrin-2 dehydrogenase /sirohydrochlorin ferrochelatase. NAD(+) contacts are provided by residues 22-23 (EV) and 43-44 (KK). S128 carries the post-translational modification Phosphoserine. Residues 215-471 (GEIILVGAGP…NLRSSVVNLA (257 aa)) form a uroporphyrinogen-III C-methyltransferase region. P224 is a binding site for S-adenosyl-L-methionine. D247 functions as the Proton acceptor in the catalytic mechanism. The Proton donor role is filled by K269. S-adenosyl-L-methionine contacts are provided by residues 300 to 302 (GGD), I305, 330 to 331 (TA), M382, and G411.

It in the N-terminal section; belongs to the precorrin-2 dehydrogenase / sirohydrochlorin ferrochelatase family. The protein in the C-terminal section; belongs to the precorrin methyltransferase family.

It catalyses the reaction uroporphyrinogen III + 2 S-adenosyl-L-methionine = precorrin-2 + 2 S-adenosyl-L-homocysteine + H(+). The enzyme catalyses precorrin-2 + NAD(+) = sirohydrochlorin + NADH + 2 H(+). It carries out the reaction siroheme + 2 H(+) = sirohydrochlorin + Fe(2+). Its pathway is cofactor biosynthesis; adenosylcobalamin biosynthesis; precorrin-2 from uroporphyrinogen III: step 1/1. It participates in cofactor biosynthesis; adenosylcobalamin biosynthesis; sirohydrochlorin from precorrin-2: step 1/1. The protein operates within porphyrin-containing compound metabolism; siroheme biosynthesis; precorrin-2 from uroporphyrinogen III: step 1/1. It functions in the pathway porphyrin-containing compound metabolism; siroheme biosynthesis; siroheme from sirohydrochlorin: step 1/1. Its pathway is porphyrin-containing compound metabolism; siroheme biosynthesis; sirohydrochlorin from precorrin-2: step 1/1. In terms of biological role, multifunctional enzyme that catalyzes the SAM-dependent methylations of uroporphyrinogen III at position C-2 and C-7 to form precorrin-2 via precorrin-1. Then it catalyzes the NAD-dependent ring dehydrogenation of precorrin-2 to yield sirohydrochlorin. Finally, it catalyzes the ferrochelation of sirohydrochlorin to yield siroheme. This Cronobacter sakazakii (strain ATCC BAA-894) (Enterobacter sakazakii) protein is Siroheme synthase 1.